A 797-amino-acid chain; its full sequence is Leucine-rich repeat-containing protein AAC1 (797 aa).

Basic and acidic residues predominate over residues 1-12 (MKRTSNRNEEAT). Disordered regions lie at residues 1-20 (MKRT…SSTT), 51-103 (YSLF…TTTT), 125-148 (NLPT…TTTT), and 307-333 (HSTS…TITA). The segment covering 55-81 (NEPNNDNDTNSSTRPNKQQKLLKSNES) has biased composition (polar residues). Residues 82–103 (TTSTTTTTTPITTTTTTTTTTT) show a composition bias toward low complexity. A compositionally biased stretch (pro residues) spans 313–326 (SSPPPPPPPPPPQI). 10 LRR repeats span residues 376–397 (KLKK…DFFS), 406–425 (TLET…QLLS), 435–456 (VLKR…YLNK), 464–484 (QLET…IMMK), 492–513 (SLKE…DFGK), 514–535 (SITS…KGLS), 543–564 (SITS…KSLS), 572–593 (TLKF…DHLV), 601–622 (SIHS…TLSQ), and 633–653 (PFKY…KKLI).

In Dictyostelium discoideum (Social amoeba), this protein is Leucine-rich repeat-containing protein AAC1 (AAC1).